A 219-amino-acid polypeptide reads, in one-letter code: Probable 3-beta-hydroxysteroid-Delta(8),Delta(7)-isomerase (219 aa).

The next 4 membrane-spanning stretches (helical) occupy residues 29–49, 62–82, 119–139, and 181–201; these read ILVPYLATSLFLLLAVWLISG, LMCWWAFTGLTHIIIEGTFVF, VEGITAVLEGPASLLAVYAIA, and FWAYFIGANSSWVVIPTMIAI. The EXPERA domain maps to 58–200; the sequence is TDRWLMCWWA…SWVVIPTMIA (143 aa).

The protein belongs to the EBP family.

Its subcellular location is the endoplasmic reticulum membrane. It catalyses the reaction lathosterol = 5alpha-cholest-8-en-3beta-ol. It participates in steroid biosynthesis; sterol biosynthesis. Functionally, catalyzes the conversion of Delta(8)-sterols to their corresponding Delta(7)-isomers. This chain is Probable 3-beta-hydroxysteroid-Delta(8),Delta(7)-isomerase, found in Oryza sativa subsp. japonica (Rice).